A 298-amino-acid chain; its full sequence is GTP cyclohydrolase FolE2 (298 aa).

It belongs to the GTP cyclohydrolase IV family.

It catalyses the reaction GTP + H2O = 7,8-dihydroneopterin 3'-triphosphate + formate + H(+). The protein operates within cofactor biosynthesis; 7,8-dihydroneopterin triphosphate biosynthesis; 7,8-dihydroneopterin triphosphate from GTP: step 1/1. Converts GTP to 7,8-dihydroneopterin triphosphate. The protein is GTP cyclohydrolase FolE2 of Neisseria meningitidis serogroup A / serotype 4A (strain DSM 15465 / Z2491).